The primary structure comprises 461 residues: Siroheme synthase (461 aa).

Positions 1-204 (MRYLPLFVYL…GNFRKANRVI (204 aa)) are precorrin-2 dehydrogenase /sirohydrochlorin ferrochelatase. NAD(+) is bound by residues 22–23 (IV) and 43–44 (KT). Ser128 bears the Phosphoserine mark. The segment at 218 to 461 (GSVSLVGAGP…HNEISWFGNG (244 aa)) is uroporphyrinogen-III C-methyltransferase. Pro227 is a binding site for S-adenosyl-L-methionine. The active-site Proton acceptor is the Asp250. The active-site Proton donor is the Lys272. S-adenosyl-L-methionine contacts are provided by residues 303–305 (GGD), Ile308, Met386, and Gly415.

In the N-terminal section; belongs to the precorrin-2 dehydrogenase / sirohydrochlorin ferrochelatase family. It in the C-terminal section; belongs to the precorrin methyltransferase family.

The catalysed reaction is uroporphyrinogen III + 2 S-adenosyl-L-methionine = precorrin-2 + 2 S-adenosyl-L-homocysteine + H(+). It carries out the reaction precorrin-2 + NAD(+) = sirohydrochlorin + NADH + 2 H(+). It catalyses the reaction siroheme + 2 H(+) = sirohydrochlorin + Fe(2+). Its pathway is cofactor biosynthesis; adenosylcobalamin biosynthesis; precorrin-2 from uroporphyrinogen III: step 1/1. It participates in cofactor biosynthesis; adenosylcobalamin biosynthesis; sirohydrochlorin from precorrin-2: step 1/1. The protein operates within porphyrin-containing compound metabolism; siroheme biosynthesis; precorrin-2 from uroporphyrinogen III: step 1/1. It functions in the pathway porphyrin-containing compound metabolism; siroheme biosynthesis; siroheme from sirohydrochlorin: step 1/1. Its pathway is porphyrin-containing compound metabolism; siroheme biosynthesis; sirohydrochlorin from precorrin-2: step 1/1. In terms of biological role, multifunctional enzyme that catalyzes the SAM-dependent methylations of uroporphyrinogen III at position C-2 and C-7 to form precorrin-2 via precorrin-1. Then it catalyzes the NAD-dependent ring dehydrogenation of precorrin-2 to yield sirohydrochlorin. Finally, it catalyzes the ferrochelation of sirohydrochlorin to yield siroheme. The protein is Siroheme synthase of Blochmanniella floridana.